Here is a 461-residue protein sequence, read N- to C-terminus: Transforming growth factor beta-1-induced transcript 1 protein (461 aa).

At Met1 the chain carries N-acetylmethionine. The tract at residues 1 to 87 is disordered; the sequence is MEDLDALLSD…PFSSSSGVLG (87 aa). The tract at residues 1–200 is transcription activation; sequence MEDLDALLSD…GSPSPPEPTG (200 aa). The segment at 1 to 240 is interaction with PTK2B/PYK2; it reads MEDLDALLSD…CNKPIAGQVV (240 aa). The short motif at 3 to 15 is the LD motif 1 element; it reads DLDALLSDLETTT. Residue Thr33 is modified to Phosphothreonine. Tyr38 bears the Phosphotyrosine mark. Positions 40-52 are enriched in polar residues; the sequence is HQPQTGSGESSGA. Tyr60 is modified (phosphotyrosine; by FAK2 and FYN). The residue at position 68 (Ser68) is a Phosphoserine. Residues 83-136 form an interaction with PTK2/FAK1 region; it reads SGVLGTGLCELDRLLQELNATQFNITDEIMSQFPSSKVASGEQKEDQSEDKKRP. Positions 92 to 104 match the LD motif 2 motif; it reads ELDRLLQELNATQ. Positions 116–152 are disordered; the sequence is PSSKVASGEQKEDQSEDKKRPSLPSSPSPGLPKASAT. The span at 124–135 shows a compositional bias: basic and acidic residues; that stretch reads EQKEDQSEDKKR. Phosphoserine occurs at positions 137, 140, 141, 143, 164, and 186. The LD motif 3 signature appears at 157–168; sequence ELDRLMASLSDF. A disordered region spans residues 172–205; the sequence is NHLPASGPTQPPVVSSTNEGSPSPPEPTGKGSLD. Residues 183–192 show a composition bias toward polar residues; that stretch reads PVVSSTNEGS. Thr188 carries the post-translational modification Phosphothreonine. Residues Ser192 and Ser194 each carry the phosphoserine modification. Positions 203–215 match the LD motif 4 motif; the sequence is SLDTMLGLLQSDL. LIM zinc-binding domains follow at residues 226-285, 286-343, 344-403, and 404-461; these read GLCG…RFSP, RCGF…QLFA, PRCQ…RRGS, and LCAT…KLFG. Phosphoserine is present on Ser403. Residue Thr407 is modified to Phosphothreonine.

The protein belongs to the paxillin family. As to quaternary structure, homooligomer. Interacts with PPARG. Interacts with TRAF4. Interacts with CRIP2. Interacts with HSPB1. Interacts with ILK. Interacts with LIMS1 and LIMS2. Interacts with NCK2. Interacts with NUDT16L1. Interacts with PAK. Interacts with PTPN12. Interacts with TCF3. Interacts with TCF7L2. Interacts with VCL. Interacts (via LD motif 3) with GIT1. Also interacts with GIT2. Forms a complex with ARHGEF7. Interacts with AR/androgen receptor in a ligand-dependent manner. Interacts with CSK. Interacts with PTK2/FAK1 and PTK2B/PYK2. Interacts with SLC6A3 and SLC6A4. Interacts with NR3C1. Interacts with SMAD3. Interacts with MAPK15. Interacts with SRC. Interacts with LYN. Interacts with talin. Interacts (via LIM zinc-binding domain 2) with CBLC (via RING-type zinc finger); the interaction is direct and enhances CBLC E3 ubiquitin-protein ligase activity. Interacts with PARVA. Interacts with PXN. In terms of processing, phosphorylated by gonadotropin-releasing hormone-activated SRC. As to expression, expressed in platelets, smooth muscle and prostate stromal cells (at protein level).

It is found in the cell junction. It localises to the focal adhesion. Its subcellular location is the nucleus matrix. The protein resides in the cytoplasm. The protein localises to the cytoskeleton. In terms of biological role, functions as a molecular adapter coordinating multiple protein-protein interactions at the focal adhesion complex and in the nucleus. Links various intracellular signaling modules to plasma membrane receptors and regulates the Wnt and TGFB signaling pathways. May also regulate SLC6A3 and SLC6A4 targeting to the plasma membrane hence regulating their activity. In the nucleus, functions as a nuclear receptor coactivator regulating glucocorticoid, androgen, mineralocorticoid and progesterone receptor transcriptional activity. May play a role in the processes of cell growth, proliferation, migration, differentiation and senescence. May have a zinc-dependent DNA-binding activity. This chain is Transforming growth factor beta-1-induced transcript 1 protein (TGFB1I1), found in Homo sapiens (Human).